We begin with the raw amino-acid sequence, 40 residues long: Natriuretic peptide PtNP-a (40 aa).

Cys9 and Cys25 are oxidised to a cystine. Over residues 17 to 34 the composition is skewed to polar residues; the sequence is ISNTSGMGCRNPIQNRPK. Residues 17–40 are disordered; it reads ISNTSGMGCRNPIQNRPKSTPGGS.

It belongs to the natriuretic peptide family. As to expression, expressed by the venom gland.

It localises to the secreted. In terms of biological role, snake venom natriuretic peptide that targets NPR1 and possibly NPR2. Exhibits hypotensive and vasodepressor activities. Recombinant PtNP-a demonstrates a dose-dependent stimulation of cGMP production via the natriuretic peptide receptor 1 (NPR1) (EC(50)=563 nM) in Madine Darby Canine Kidney (MDCK) cells. It also inhibits the angiotensin converting enzyme (ACE). The sequence is that of Natriuretic peptide PtNP-a from Pseudonaja textilis (Eastern brown snake).